Consider the following 395-residue polypeptide: Glyceraldehyde-3-phosphate dehydrogenase, testis-specific (395 aa).

The segment at M1–V60 is testis-specific N-terminal extension. The interval Q19–K59 is disordered. Composition is skewed to pro residues over residues E31–E41 and P48–P57. NAD(+) contacts are provided by residues R72–I73, D93, and K138. Residues S210–T212, T241, T270–G271, and R293 contribute to the D-glyceraldehyde 3-phosphate site. The Nucleophile role is filled by C211. N375 is a binding site for NAD(+).

This sequence belongs to the glyceraldehyde-3-phosphate dehydrogenase family. Homotetramer.

It is found in the cytoplasm. The enzyme catalyses D-glyceraldehyde 3-phosphate + phosphate + NAD(+) = (2R)-3-phospho-glyceroyl phosphate + NADH + H(+). It functions in the pathway carbohydrate degradation; glycolysis; pyruvate from D-glyceraldehyde 3-phosphate: step 1/5. Functionally, may play an important role in regulating the switch between different pathways for energy production during spermiogenesis and in the spermatozoon. Required for sperm motility and male fertility. In Bos taurus (Bovine), this protein is Glyceraldehyde-3-phosphate dehydrogenase, testis-specific (GAPDHS).